Here is a 220-residue protein sequence, read N- to C-terminus: Gene 32 protein (220 aa).

The interval 184–205 (NSAGGNGNAPGGGGAGAQVSAQ) is disordered. Over residues 187–199 (GGNGNAPGGGGAG) the composition is skewed to gly residues.

This chain is Gene 32 protein (32), found in Mycobacterium (Mycobacteriophage L5).